We begin with the raw amino-acid sequence, 576 residues long: Arginine--tRNA ligase (576 aa).

Residues 132-142 (ANPTGPMHIGH) carry the 'HIGH' region motif.

This sequence belongs to the class-I aminoacyl-tRNA synthetase family. In terms of assembly, monomer.

Its subcellular location is the cytoplasm. The catalysed reaction is tRNA(Arg) + L-arginine + ATP = L-arginyl-tRNA(Arg) + AMP + diphosphate. The protein is Arginine--tRNA ligase of Ehrlichia ruminantium (strain Welgevonden).